Here is a 273-residue protein sequence, read N- to C-terminus: Homeobox protein Hox-C13b (273 aa).

A DNA-binding region (homeobox) is located at residues 201–260 (GRKKRVPYTKIQLKELEKEYAASKFITKDRRRRISATTSLSERQVTIWFQNRRVKEKKFV).

It belongs to the Abd-B homeobox family.

It localises to the nucleus. Its function is as follows. Sequence-specific transcription factor which is part of a developmental regulatory system that provides cells with specific positional identities on the anterior-posterior axis. Plays a role in early embryonic development. This Danio rerio (Zebrafish) protein is Homeobox protein Hox-C13b (hoxc13b).